A 159-amino-acid polypeptide reads, in one-letter code: NADH-quinone oxidoreductase subunit B (159 aa).

Residues Cys32, Cys33, Cys97, and Cys126 each coordinate [4Fe-4S] cluster.

The protein belongs to the complex I 20 kDa subunit family. NDH-1 is composed of 14 different subunits. Subunits NuoB, C, D, E, F, and G constitute the peripheral sector of the complex. The cofactor is [4Fe-4S] cluster.

It localises to the cell inner membrane. It catalyses the reaction a quinone + NADH + 5 H(+)(in) = a quinol + NAD(+) + 4 H(+)(out). Functionally, NDH-1 shuttles electrons from NADH, via FMN and iron-sulfur (Fe-S) centers, to quinones in the respiratory chain. The immediate electron acceptor for the enzyme in this species is believed to be ubiquinone. Couples the redox reaction to proton translocation (for every two electrons transferred, four hydrogen ions are translocated across the cytoplasmic membrane), and thus conserves the redox energy in a proton gradient. In Helicobacter acinonychis (strain Sheeba), this protein is NADH-quinone oxidoreductase subunit B.